The sequence spans 269 residues: Ribosomal RNA small subunit methyltransferase A (269 aa).

Positions 12, 14, 39, 60, 81, and 103 each coordinate S-adenosyl-L-methionine.

It belongs to the class I-like SAM-binding methyltransferase superfamily. rRNA adenine N(6)-methyltransferase family. RsmA subfamily.

Its subcellular location is the cytoplasm. It catalyses the reaction adenosine(1518)/adenosine(1519) in 16S rRNA + 4 S-adenosyl-L-methionine = N(6)-dimethyladenosine(1518)/N(6)-dimethyladenosine(1519) in 16S rRNA + 4 S-adenosyl-L-homocysteine + 4 H(+). Functionally, specifically dimethylates two adjacent adenosines (A1518 and A1519) in the loop of a conserved hairpin near the 3'-end of 16S rRNA in the 30S particle. May play a critical role in biogenesis of 30S subunits. The protein is Ribosomal RNA small subunit methyltransferase A of Leptothrix cholodnii (strain ATCC 51168 / LMG 8142 / SP-6) (Leptothrix discophora (strain SP-6)).